A 418-amino-acid chain; its full sequence is Equilibrative nucleotide transporter 6 (418 aa).

The next 11 membrane-spanning stretches (helical) occupy residues 19–39, 56–76, 86–106, 112–132, 142–162, 186–206, 264–284, 291–311, 326–346, 353–373, and 392–412; these read AMIVYCILGFGSLISWNSMLT, VLTLVYQPFAFGAIVILAYHE, LIGYILYTISTFLLIVLDLAT, FGPYTGLCAVVAAFGLADATV, LMCPELVQSYMGGMAVAGALT, MFLAISTCIELLSVMLYAYVL, HAVNLFLIYVCTLSIFPGFLY, GLGAWYALVLVAMYNCWDLVG, KLITIAVLSRYLLIPAFYFTA, WMIMLVSVLGLTNGHLTVCIM, and LVIFLLGGIFAGVALDWLWLI.

It belongs to the SLC29A/ENT transporter (TC 2.A.57) family. As to expression, expressed in leaves and siliques.

It localises to the cell membrane. Functionally, nucleoside transporter that can mediate uptake of adenosine, uridine, guanosine or cytidine when expressed in a heterologous system (yeast). This chain is Equilibrative nucleotide transporter 6 (ENT6), found in Arabidopsis thaliana (Mouse-ear cress).